Here is a 455-residue protein sequence, read N- to C-terminus: UDP-glycosyltransferase 75B2 (455 aa).

The active-site Proton acceptor is His-16. His-16 contacts an anthocyanidin. Gln-337, His-352, Trp-355, Ser-357, Glu-360, Asp-376, and Gln-377 together coordinate UDP-alpha-D-glucose.

The protein belongs to the UDP-glycosyltransferase family.

It carries out the reaction (indol-3-yl)acetate + UDP-alpha-D-glucose = 1-O-(indol-3-ylacetyl)-beta-D-glucose + UDP. It participates in plant hormone metabolism; auxin conjugation. Its function is as follows. Possesses low catalytic activity in vitro. Also active as glucosyltransferase in vitro on benzoates and benzoate derivatives. In Arabidopsis thaliana (Mouse-ear cress), this protein is UDP-glycosyltransferase 75B2 (UGT75B2).